Reading from the N-terminus, the 232-residue chain is Ribonuclease 3 (232 aa).

In terms of domain architecture, RNase III spans 9–131; the sequence is INLLQKKLGY…IIGGIFLDSN (123 aa). Glu-44 serves as a coordination point for Mg(2+). The active site involves Asp-48. Mg(2+) contacts are provided by Asp-117 and Glu-120. Residue Glu-120 is part of the active site. Positions 158–228 constitute a DRBM domain; that stretch reads DPKTRLQEYL…AENALKFLIE (71 aa).

This sequence belongs to the ribonuclease III family. Homodimer. Requires Mg(2+) as cofactor.

The protein resides in the cytoplasm. The enzyme catalyses Endonucleolytic cleavage to 5'-phosphomonoester.. Digests double-stranded RNA. Involved in the processing of primary rRNA transcript to yield the immediate precursors to the large and small rRNAs (23S and 16S). Processes some mRNAs, and tRNAs when they are encoded in the rRNA operon. Processes pre-crRNA and tracrRNA of type II CRISPR loci if present in the organism. The polypeptide is Ribonuclease 3 (Blochmanniella floridana).